The primary structure comprises 446 residues: Thymidine phosphorylase (446 aa).

It belongs to the thymidine/pyrimidine-nucleoside phosphorylase family. In terms of assembly, homodimer.

The enzyme catalyses thymidine + phosphate = 2-deoxy-alpha-D-ribose 1-phosphate + thymine. The protein operates within pyrimidine metabolism; dTMP biosynthesis via salvage pathway; dTMP from thymine: step 1/2. Functionally, the enzymes which catalyze the reversible phosphorolysis of pyrimidine nucleosides are involved in the degradation of these compounds and in their utilization as carbon and energy sources, or in the rescue of pyrimidine bases for nucleotide synthesis. This chain is Thymidine phosphorylase, found in Psychromonas ingrahamii (strain DSM 17664 / CCUG 51855 / 37).